Consider the following 260-residue polypeptide: tRNA pseudouridine synthase C (260 aa).

Residue Asp-54 is part of the active site.

The protein belongs to the pseudouridine synthase RluA family.

It carries out the reaction uridine(65) in tRNA = pseudouridine(65) in tRNA. Responsible for synthesis of pseudouridine from uracil-65 in transfer RNAs. This chain is tRNA pseudouridine synthase C (truC), found in Escherichia coli O157:H7.